We begin with the raw amino-acid sequence, 359 residues long: Guanine nucleotide-binding protein subunit alpha-11 (359 aa).

2 S-palmitoyl cysteine lipidation sites follow: Cys9 and Cys10. The region spanning 38–359 is the G-alpha domain; that stretch reads RELKLLLLGT…QLNLKEYNLV (322 aa). The interval 41–54 is G1 motif; that stretch reads KLLLLGTGESGKST. Residues 46-53 and 180-183 contribute to the GTP site; these read GTGESGKS and LRVR. Position 53 (Ser53) interacts with Mg(2+). Residues 178–186 are G2 motif; sequence DVLRVRVPT. A Mg(2+)-binding site is contributed by Thr186. Residues 201–210 are G3 motif; it reads FRMVDVGGQR. Gln209 carries the post-translational modification Deamidated glutamine; by Photorhabdus PAU_02230. The G4 motif stretch occupies residues 270–277; that stretch reads ILFLNKKD. GTP contacts are provided by residues 274 to 277 and Ala331; that span reads NKKD. A G5 motif region spans residues 329–334; that stretch reads TCATDT.

Belongs to the G-alpha family. G(q) subfamily. As to quaternary structure, g proteins are composed of 3 units; alpha, beta and gamma. The alpha chain contains the guanine nucleotide binding site. Interacts with RGS22. Interacts with NTSR1. (Microbial infection) Interacts with human cytomegalovirus (HHV-5) US28. Post-translationally, (Microbial infection) Deamidated at Gln-209 by Photorhabdus asymbiotica toxin PAU_02230, blocking GTP hydrolysis of heterotrimeric GNAQ or GNA11 and G-alphai (GNAI1, GNAI2 or GNAI3) proteins, thereby activating RhoA. In terms of tissue distribution, expressed in testis.

It is found in the cell membrane. Its subcellular location is the cytoplasm. It carries out the reaction GTP + H2O = GDP + phosphate + H(+). Its function is as follows. Guanine nucleotide-binding proteins (G proteins) function as transducers downstream of G protein-coupled receptors (GPCRs) in numerous signaling cascades. The alpha chain contains the guanine nucleotide binding site and alternates between an active, GTP-bound state and an inactive, GDP-bound state. Signaling by an activated GPCR promotes GDP release and GTP binding. The alpha subunit has a low GTPase activity that converts bound GTP to GDP, thereby terminating the signal. Both GDP release and GTP hydrolysis are modulated by numerous regulatory proteins. Signaling is mediated via phospholipase C-beta-dependent inositol lipid hydrolysis for signal propagation: activates phospholipase C-beta: following GPCR activation, GNA11 activates PLC-beta (PLCB1, PLCB2, PLCB3 or PLCB4), leading to production of diacylglycerol (DAG) and inositol 1,4,5-trisphosphate (IP3). Transduces FFAR4 signaling in response to long-chain fatty acids (LCFAs). Together with GNAQ, required for heart development. In the respiratory epithelium, transmits OXGR1-dependent signals that lead to downstream intracellular Ca(2+) release and mucocilliary clearance of airborne pathogens. In Homo sapiens (Human), this protein is Guanine nucleotide-binding protein subunit alpha-11 (GNA11).